Consider the following 318-residue polypeptide: Ribosomal RNA small subunit methyltransferase H (318 aa).

Residues 38–40 (AGH), Asp57, Leu91, Asp105, and Gln112 each bind S-adenosyl-L-methionine.

The protein belongs to the methyltransferase superfamily. RsmH family.

It is found in the cytoplasm. The enzyme catalyses cytidine(1402) in 16S rRNA + S-adenosyl-L-methionine = N(4)-methylcytidine(1402) in 16S rRNA + S-adenosyl-L-homocysteine + H(+). Functionally, specifically methylates the N4 position of cytidine in position 1402 (C1402) of 16S rRNA. The polypeptide is Ribosomal RNA small subunit methyltransferase H (Clavibacter michiganensis subsp. michiganensis (strain NCPPB 382)).